Consider the following 1282-residue polypeptide: Cytokine receptor (1282 aa).

Residues 1-23 (MVAQEQLVLLLMLLAGCRGGANA) form the signal peptide. Residues 24–889 (ILDPGWVIPS…CTPDTHSVKA (866 aa)) are Extracellular-facing. N-linked (GlcNAc...) asparagine glycans are attached at residues N44, N86, N87, and N114. C47 and C106 are oxidised to a cystine. Fibronectin type-III domains lie at 124–220 (PLLV…NHFE), 227–327 (PGQN…TAPA), 329–431 (PRRP…SNRD), 436–535 (EPRN…KKDD), 537–631 (AKME…TGEA), 635–735 (QPRE…TAIG), and 736–836 (VPSP…LMST). Residues C132 and C142 are joined by a disulfide bond. N143 and N156 each carry an N-linked (GlcNAc...) asparagine glycan. A disulfide bridge links C173 with C183. N184, N230, N235, N278, N298, N310, N376, N448, and N466 each carry an N-linked (GlcNAc...) asparagine glycan. C472 and C482 are oxidised to a cystine. N568, N581, N626, N676, N703, N777, N790, and N862 each carry an N-linked (GlcNAc...) asparagine glycan. The chain crosses the membrane as a helical span at residues 890–910 (MYQTIEVTVAILVLGVIFYLV). Topologically, residues 911-1282 (YKKYRKMSDI…NAMAHNRHVL (372 aa)) are cytoplasmic. S976 is modified (phosphoserine). 2 disordered regions span residues 989–1092 (TASS…HTFS) and 1238–1258 (TVGS…QHSR). Basic and acidic residues-rich tracts occupy residues 999-1009 (VDRDGYDDNHE) and 1033-1064 (NDRE…DREQ).

Belongs to the type I cytokine receptor family. As to quaternary structure, interacts with wdp; the interaction promotes internalization of dome and its subsequent lysosomal degradation; thereby reducing JAK/STAT signaling. Undergoes lysosomal degradation. As to expression, in stage 11 embryos, tracheal pits show highest expression, at stage 14 high expression is detected in the posterior spiracles, gut and head.

Its subcellular location is the apicolateral cell membrane. Its function is as follows. Critical for epithelial morphogenesis during oogenesis; border cell migration. Required in the germarium for the polarization of follicle cells during encapsulation of germline cells. Required for embryonic segmentation and trachea specification. Essential receptor molecule for upd and JAK/STAT signaling during oogenesis. In Drosophila melanogaster (Fruit fly), this protein is Cytokine receptor (dome).